The sequence spans 108 residues: DNA-binding protein HBbu (108 aa).

Belongs to the bacterial histone-like protein family.

Its function is as follows. Histone-like DNA-binding protein which is capable of wrapping DNA to stabilize it, and thus to prevent its denaturation under extreme environmental conditions. The sequence is that of DNA-binding protein HBbu (hbb) from Borrelia garinii subsp. bavariensis (strain ATCC BAA-2496 / DSM 23469 / PBi) (Borreliella bavariensis).